The chain runs to 147 residues: Hemoglobin subunit beta-1 (147 aa).

Val-2 is modified (N-acetylvaline). The Globin domain maps to 3 to 147; that stretch reads HLTDAEKAAV…VASALAHKYH (145 aa). The residue at position 18 (Lys-18) is an N6-succinyllysine. Phosphoserine occurs at positions 45, 51, and 53. Residue Lys-60 is modified to N6-succinyllysine. Heme b-binding residues include His-64 and His-93. Arg-105 carries the post-translational modification Asymmetric dimethylarginine. Thr-124 carries the post-translational modification Phosphothreonine.

It belongs to the globin family. As to quaternary structure, heterotetramer of two alpha chains and two beta chains. Red blood cells.

In terms of biological role, involved in oxygen transport from the lung to the various peripheral tissues. In Rattus norvegicus (Rat), this protein is Hemoglobin subunit beta-1 (Hbb).